The following is a 337-amino-acid chain: MTLNIGVIGTGAIGRDHIRRCSKVLQGSRIVAVNDINRDNAAKVVSDLKLDAKVYDNGHDLVKAADVQAVLVTSWGPSHEEFVLAAIAAGKPVFCEKPLAVTAQGCKNIVEAEAKHGKRLVQVGFMRPYDQGYRALKQVLTSGQIGEPLMLHCAHRNPTVGEAYTTDMAITDTLIHEIDVLRWLLDDDYVSVQVVFPRKSAKAFPHLKDPQIVLFETAKGTRIDVEIFVNCQYGYDIQCEVVGETGIAKLPEPSSVQMRSGAKLSTEILTDWKDRFIDAYDVELQGFINDVLAGKLTGPSAWDGYAAAVTADACVAAQLSGEIVPVTLPPRPAFYNK.

Belongs to the Gfo/Idh/MocA family. As to quaternary structure, homotetramer.

It catalyses the reaction myo-inositol + NAD(+) = scyllo-inosose + NADH + H(+). In terms of biological role, involved in the oxidation of myo-inositol (MI) to 2-keto-myo-inositol (2KMI or 2-inosose). In Serratia proteamaculans (strain 568), this protein is Inositol 2-dehydrogenase.